The chain runs to 493 residues: Glutamyl-tRNA(Gln) amidotransferase subunit A (493 aa).

Residues lysine 79 and serine 159 each act as charge relay system in the active site. Catalysis depends on serine 183, which acts as the Acyl-ester intermediate.

Belongs to the amidase family. GatA subfamily. Heterotrimer of A, B and C subunits.

The enzyme catalyses L-glutamyl-tRNA(Gln) + L-glutamine + ATP + H2O = L-glutaminyl-tRNA(Gln) + L-glutamate + ADP + phosphate + H(+). In terms of biological role, allows the formation of correctly charged Gln-tRNA(Gln) through the transamidation of misacylated Glu-tRNA(Gln) in organisms which lack glutaminyl-tRNA synthetase. The reaction takes place in the presence of glutamine and ATP through an activated gamma-phospho-Glu-tRNA(Gln). The protein is Glutamyl-tRNA(Gln) amidotransferase subunit A of Sinorhizobium fredii (strain NBRC 101917 / NGR234).